The chain runs to 2310 residues: Retinal-specific phospholipid-transporting ATPase ABCA4 (2310 aa).

The Cytoplasmic portion of the chain corresponds to 1 to 21; sequence MGFLRQIQLLLWKNWTLRKRQ. The helical transmembrane segment at 22 to 42 threads the bilayer; the sequence is KIRFVVELVWPLSLFLVLIWL. Residues 43–646 are Extracellular-facing; it reads RNANPLYSQH…MPYPCFVDDS (604 aa). 2 disulfides stabilise this stretch: Cys54–Cys81 and Cys75–Cys324. N-linked (GlcNAc...) asparagine glycosylation is present at Asn98. Residues Ser336 and Asn338 each coordinate Mg(2+). A disulfide bridge links Cys370 with Cys519. Residues Asn415 and Asn504 are each glycosylated (N-linked (GlcNAc...) asparagine). An N-all-trans-retinylidenephosphatidylethanolamine contacts are provided by Arg587 and Arg653. Disulfide bonds link Cys641–Cys1489, Cys1443–Cys1454, and Cys1487–Cys1501. A helical transmembrane segment spans residues 647–667; it reads FMIILNRCFPIFMVLAWIYSV. The Cytoplasmic segment spans residues 668 to 699; it reads SMTVKGIVLEKELRLKETLKNQGVSNAVIWCT. Residues 700 to 720 form a helical membrane-spanning segment; sequence WFLDSFSIMALSIFLLTLFIM. Residues 721-730 lie on the Extracellular side of the membrane; it reads HGRILHYSDP. A helical membrane pass occupies residues 731–751; sequence FILFLFLLAFATATIMQSFLL. Residues 752-759 are Cytoplasmic-facing; that stretch reads STLFSKAS. A helical transmembrane segment spans residues 760 to 780; that stretch reads LAAACSGVIYFTLYLPHVLCF. At 781-835 the chain is on the extracellular side; it reads AWQDRMTADLKTTVSLLSSVAFGFGTEYLVRFEEQGLGLQWSNIGKSPLEGDEFS. Residues 836 to 856 form a helical membrane-spanning segment; the sequence is FLLSMKMMLLDAALYGLLAWY. Residues 857–1375 are Cytoplasmic-facing; sequence LDQVFPGDYG…IRSRKDFVAQ (519 aa). Positions 891 to 910 are disordered; the sequence is ERALEKTEPLTEEMEDPEHP. A Phosphothreonine modification is found at Thr901. One can recognise an ABC transporter 1 domain in the interval 929–1160; the sequence is VCVKNLVKVF…FGTGFYLTLV (232 aa). Residues Phe938, Gly966, and Lys969 each contribute to the ATP site. Thr970 is a binding site for Mg(2+). ATP is bound by residues Thr971, Gln1010, Lys1054, Gly1064, Gly1065, and His1118. Position 1185 is a phosphoserine (Ser1185). The segment at 1311 to 1344 is disordered; sequence RQYAQAPHTCSPGQVDPPKGQPSPEPEDPGVPFN. The helical transmembrane segment at 1376–1396 threads the bilayer; it reads IVLPATFVFLALMLSIIVPPF. Topologically, residues 1397-1726 are extracellular; it reads GEFPALTLHP…VSPTTYWLTN (330 aa). Residue Asn1468 is glycosylated (N-linked (GlcNAc...) asparagine). N-linked (GlcNAc...) asparagine glycosylation is found at Asn1528, Asn1587, and Asn1661. The chain crosses the membrane as a helical span at residues 1727-1747; that stretch reads FLWDIMNYAVSAGLVVGIFIG. Residues 1748–1758 are Cytoplasmic-facing; sequence FQKKAYTSPDN. A helical membrane pass occupies residues 1759–1779; sequence LPALVSLLMLYGWAVIPMMYP. Over 1780 to 1791 the chain is Extracellular; the sequence is ASFLFEVPSTAY. Residues 1792 to 1812 form a helical membrane-spanning segment; the sequence is VALSCANLFIGINSSAITFVL. Residues 1813–1830 are Cytoplasmic-facing; it reads ELFENNRTLLRFNAMLRK. Residues 1831–1851 form a helical membrane-spanning segment; that stretch reads LLIVFPHFCLGRGLIDLALSQ. Residues 1852–1872 are Extracellular-facing; the sequence is AVTDVYAQFGEEYSANPFQWD. A helical membrane pass occupies residues 1873–1893; sequence LIGKNLVAMAIEGVVYFLLTL. Topologically, residues 1894–2310 are cytoplasmic; the sequence is LIQHHFFLTR…AEDKHTRSPQ (417 aa). The ABC transporter 2 domain occupies 1937–2169; sequence LKLNELTKVY…FGDGYIVTMK (233 aa). ATP-binding residues include Asn1973, Gly1974, Lys1977, Thr1978, Thr1979, and Gly2072. Thr1978 contacts Mg(2+). An essential for ATP binding and ATPase activity region spans residues 2243-2248; it reads VFVNFA. The segment at 2266 to 2310 is disordered; it reads ASWQAKLEEKSGRLQTQEPLPAGSEQLANGSNPTAAEDKHTRSPQ. A compositionally biased stretch (basic and acidic residues) spans 2301–2310; it reads AEDKHTRSPQ.

The protein belongs to the ABC transporter superfamily. ABCA family. N-glycosylated. Post-translationally, proteolytic cleavage by trypsin leads to a 120-kDa N-terminal fragment and a 115-kDa C-terminal fragment that are linked through disulfide bonds. In terms of processing, phosphorylation is independent of light exposure and modulates ATPase activity. In terms of tissue distribution, retinal-specific. Seems to be exclusively found in the rims of rod photoreceptor cells.

It localises to the membrane. Its subcellular location is the endoplasmic reticulum. The protein localises to the cell projection. The protein resides in the cilium. It is found in the photoreceptor outer segment. It catalyses the reaction an N-all-trans-retinylidenephosphatidylethanolamine(out) + ATP + H2O = an N-all-trans-retinylidenephosphatidylethanolamine(in) + ADP + phosphate + H(+). It carries out the reaction ATP + H2O + phospholipidSide 1 = ADP + phosphate + phospholipidSide 2.. The catalysed reaction is a 1,2-diacyl-sn-glycero-3-phosphoethanolamine(out) + ATP + H2O = a 1,2-diacyl-sn-glycero-3-phosphoethanolamine(in) + ADP + phosphate + H(+). The enzyme catalyses N-11-cis-retinylidenephosphatidylethanolamine(out) + ATP + H2O = N-11-cis-retinylidenephosphatidylethanolamine(in) + ADP + phosphate + H(+). It catalyses the reaction ATP + H2O = ADP + phosphate + H(+). With respect to regulation, ATPase activity is decreased by cholesterol and ceramide. Phospholipids translocase activity is highly reduced by berylium fluoride and aluminum floride. N-ethylmaleimide inhibits phospholipid translocase activity. Its function is as follows. Flippase that catalyzes in an ATP-dependent manner the transport of retinal-phosphatidylethanolamine conjugates like the 11-cis and all-trans isomers of N-retinylidene-phosphatidylethanolamine from the lumen to the cytoplasmic leaflet of photoreceptor outer segment disk membranes, where N-cis-retinylidene-phosphatidylethanolamine (N-cis-R-PE) is then isomerized to its all-trans isomer (N-trans-R-PE) and reduced by RDH8 to produce all-trans-retinol (all-trans-rol) and therefore prevents the accumulation of excess of 11-cis-retinal and its schiff-base conjugate and the formation of toxic bisretinoid. Displays ATPase activity in vitro in absence of retinal substrate. May display GTPase activity that is strongly influenced by the lipid environment and the presence of retinoid compounds. Binds the unprotonated form of N-retinylidene-phosphatidylethanolamine with high affinity in the absence of ATP and ATP binding and hydrolysis induce a protein conformational change that causes the dissociation of N-retinylidene-phosphatidylethanolamine. The chain is Retinal-specific phospholipid-transporting ATPase ABCA4 from Mus musculus (Mouse).